A 246-amino-acid chain; its full sequence is tRNA (guanine-N(1)-)-methyltransferase (246 aa).

S-adenosyl-L-methionine contacts are provided by residues G117 and 137 to 142; that span reads IGDYVL.

Belongs to the RNA methyltransferase TrmD family. As to quaternary structure, homodimer.

Its subcellular location is the cytoplasm. The enzyme catalyses guanosine(37) in tRNA + S-adenosyl-L-methionine = N(1)-methylguanosine(37) in tRNA + S-adenosyl-L-homocysteine + H(+). Its function is as follows. Specifically methylates guanosine-37 in various tRNAs. This Acinetobacter baumannii (strain AB307-0294) protein is tRNA (guanine-N(1)-)-methyltransferase.